An 85-amino-acid polypeptide reads, in one-letter code: Small ribosomal subunit protein uS17 (85 aa).

It belongs to the universal ribosomal protein uS17 family. As to quaternary structure, part of the 30S ribosomal subunit.

One of the primary rRNA binding proteins, it binds specifically to the 5'-end of 16S ribosomal RNA. This is Small ribosomal subunit protein uS17 from Geobacter sp. (strain M21).